Here is a 306-residue protein sequence, read N- to C-terminus: Malate dehydrogenase (306 aa).

NAD(+) contacts are provided by residues 8–13 (GVGRVG) and Asp33. Positions 82 and 88 each coordinate substrate. Residues Asn95 and 118–120 (VAN) contribute to the NAD(+) site. 2 residues coordinate substrate: Asn120 and Arg148. The active-site Proton acceptor is His172.

This sequence belongs to the LDH/MDH superfamily.

It carries out the reaction (S)-malate + NAD(+) = oxaloacetate + NADH + H(+). Functionally, catalyzes the reversible oxidation of malate to oxaloacetate. The chain is Malate dehydrogenase (mdh) from Sulfolobus acidocaldarius (strain ATCC 33909 / DSM 639 / JCM 8929 / NBRC 15157 / NCIMB 11770).